Here is a 218-residue protein sequence, read N- to C-terminus: Pyridoxine/pyridoxamine 5'-phosphate oxidase (218 aa).

Substrate-binding positions include 11 to 14 and K75; that span reads RVEY. FMN-binding positions include 70-75, 85-86, K92, and Q114; these read RTVLCK and YT. Residues Y132, R136, and S140 each coordinate substrate. Residues 149–150 and W195 contribute to the FMN site; that span reads QS. Substrate is bound at residue 201 to 203; the sequence is RVH. R205 contributes to the FMN binding site.

The protein belongs to the pyridoxamine 5'-phosphate oxidase family. Homodimer. FMN serves as cofactor.

The enzyme catalyses pyridoxamine 5'-phosphate + O2 + H2O = pyridoxal 5'-phosphate + H2O2 + NH4(+). It carries out the reaction pyridoxine 5'-phosphate + O2 = pyridoxal 5'-phosphate + H2O2. It participates in cofactor metabolism; pyridoxal 5'-phosphate salvage; pyridoxal 5'-phosphate from pyridoxamine 5'-phosphate: step 1/1. It functions in the pathway cofactor metabolism; pyridoxal 5'-phosphate salvage; pyridoxal 5'-phosphate from pyridoxine 5'-phosphate: step 1/1. Catalyzes the oxidation of either pyridoxine 5'-phosphate (PNP) or pyridoxamine 5'-phosphate (PMP) into pyridoxal 5'-phosphate (PLP). This chain is Pyridoxine/pyridoxamine 5'-phosphate oxidase, found in Mycolicibacterium gilvum (strain PYR-GCK) (Mycobacterium gilvum (strain PYR-GCK)).